The sequence spans 300 residues: Cation-efflux pump FieF (300 aa).

A run of 4 helical transmembrane segments spans residues 12–32 (AAIAATAMASLLLLIKIFAWW), 39–59 (ILAALVDSLVDIGASLTNLLV), 82–102 (AALAQSMFISGSALFLFLTGI), and 114–134 (PGVGVIVTIVALICTIILVSF). Zn(2+)-binding residues include Asp-45 and Asp-49. Zn(2+)-binding residues include His-153 and Asp-157. Helical transmembrane passes span 156 to 176 (SDVMMNGAILLALGLSWYGWH) and 178 to 198 (ADALFALGIGIYILYSALRMG).

This sequence belongs to the cation diffusion facilitator (CDF) transporter (TC 2.A.4) family. FieF subfamily. In terms of assembly, homodimer.

It is found in the cell inner membrane. It catalyses the reaction Zn(2+)(in) + H(+)(out) = Zn(2+)(out) + H(+)(in). It carries out the reaction Cd(2+)(in) + H(+)(out) = Cd(2+)(out) + H(+)(in). The catalysed reaction is Fe(2+)(in) + H(+)(out) = Fe(2+)(out) + H(+)(in). Divalent metal cation transporter which exports Zn(2+), Cd(2+) and possibly Fe(2+). May be involved in zinc and iron detoxification by efflux. The polypeptide is Cation-efflux pump FieF (Escherichia coli O7:K1 (strain IAI39 / ExPEC)).